A 577-amino-acid polypeptide reads, in one-letter code: Zona pellucida sperm-binding protein 3 receptor (577 aa).

The first 32 residues, 1-32, serve as a signal peptide directing secretion; the sequence is MTAWSLHELWKTSHSTLFQVTLATVLMAPVLG. 6 Sushi domains span residues 33–92, 93–154, 155–219, 220–279, 280–346, and 347–412; these read DCGP…FCAR, KRCK…ECVI, ATCE…ACEK, IVCH…TCEP, NGCI…GCER, and VCCP…SCEA. 12 cysteine pairs are disulfide-bonded: Cys34-Cys78, Cys64-Cys90, Cys95-Cys136, Cys122-Cys152, Cys157-Cys200, Cys186-Cys217, Cys222-Cys264, Cys250-Cys277, Cys282-Cys332, Cys316-Cys344, Cys349-Cys397, and Cys382-Cys410. Residues Asn72 and Asn81 are each glycosylated (N-linked (GlcNAc...) asparagine). Asn144, Asn195, and Asn204 each carry an N-linked (GlcNAc...) asparagine glycan. The N-linked (GlcNAc...) asparagine glycan is linked to Asn335. 7 N-linked (GlcNAc...) asparagine glycosylation sites follow: Asn426, Asn431, Asn434, Asn443, Asn462, Asn475, and Asn497. Residues 451–509 form the Sushi 7 domain; the sequence is AVCPKPEIINGNLSVEKEIYAEMENITIQCDSGYDLVGSSNIICLENRTWYPDIPFCIM. 2 disulfide bridges follow: Cys453-Cys494 and Cys480-Cys507.

As to quaternary structure, homomultimer; disulfide-linked. Glycosylated. As to expression, testis specific.

Its subcellular location is the cytoplasmic vesicle. It is found in the secretory vesicle. The protein resides in the acrosome lumen. Binds to ZP3 glycoprotein in egg zona pellucida. Probably involved in interactions between sperm acrosome and egg zona pellucida during and immediately following the acrosome reaction. In Rattus norvegicus (Rat), this protein is Zona pellucida sperm-binding protein 3 receptor (Zp3r).